Reading from the N-terminus, the 716-residue chain is Putative cuticle collagen 99 (716 aa).

2 disordered regions span residues 85 to 122 and 183 to 472; these read LPSS…PVGP and PPGP…SLVA. Triple-helical region regions lie at residues 179–238, 265–298, and 302–330; these read GMPG…KGDR, LPGP…FDGE, and GPKG…EKGD. Over residues 266-277 the composition is skewed to pro residues; sequence PGPPGPPGPPGP. Residues 280-290 are compositionally biased toward basic and acidic residues; sequence RDGRHGLKGDR. The span at 349–358 shows a compositional bias: pro residues; that stretch reads PGPPGPPGPP. Triple-helical region regions lie at residues 385-411 and 422-467; these read GPPG…AGAA and GPPG…GRHG. Residues 389–401 show a composition bias toward basic and acidic residues; sequence EKGERGERGEPGD. Over residues 402-422 the composition is skewed to low complexity; the sequence is RGLPGAAGAANLLNGGKALVG. The span at 429–444 shows a compositional bias: basic and acidic residues; the sequence is RDGRPGDKGEKGEQGL. Residue Asn474 is glycosylated (N-linked (GlcNAc...) asparagine). Residues 503–716 form a disordered region; that stretch reads KNVIPGPPGP…GAETRPPVTD (214 aa). 3 triple-helical region regions span residues 507-557, 566-603, and 605-664; these read PGPP…QPGA, GPRG…PPGP, and GLRG…PGLD. A compositionally biased stretch (pro residues) spans 568-577; sequence RGPPGLPGPP.

Belongs to the cuticular collagen family. As to quaternary structure, collagen polypeptide chains are complexed within the cuticle by disulfide bonds and other types of covalent cross-links.

Its function is as follows. Nematode cuticles are composed largely of collagen-like proteins. The cuticle functions both as an exoskeleton and as a barrier to protect the worm from its environment. The chain is Putative cuticle collagen 99 (col-99) from Caenorhabditis elegans.